A 251-amino-acid polypeptide reads, in one-letter code: Pyrroline-5-carboxylate reductase (251 aa).

Belongs to the pyrroline-5-carboxylate reductase family.

The protein localises to the cytoplasm. It carries out the reaction L-proline + NADP(+) = (S)-1-pyrroline-5-carboxylate + NADPH + 2 H(+). It catalyses the reaction L-proline + NAD(+) = (S)-1-pyrroline-5-carboxylate + NADH + 2 H(+). It functions in the pathway amino-acid biosynthesis; L-proline biosynthesis; L-proline from L-glutamate 5-semialdehyde: step 1/1. In terms of biological role, catalyzes the reduction of 1-pyrroline-5-carboxylate (PCA) to L-proline. The sequence is that of Pyrroline-5-carboxylate reductase (proC) from Methanobrevibacter smithii.